Reading from the N-terminus, the 516-residue chain is Probable serine/threonine-protein kinase ECU02_0550 (516 aa).

In terms of domain architecture, Protein kinase spans 4-230; the sequence is YKLRQVIGEG…ASEALMHRSF (227 aa). ATP-binding positions include 10–18 and Lys32; that span reads IGEGASSTV. The active-site Proton acceptor is Asp120.

It belongs to the protein kinase superfamily. CAMK Ser/Thr protein kinase family.

It carries out the reaction L-seryl-[protein] + ATP = O-phospho-L-seryl-[protein] + ADP + H(+). It catalyses the reaction L-threonyl-[protein] + ATP = O-phospho-L-threonyl-[protein] + ADP + H(+). This Encephalitozoon cuniculi (strain GB-M1) (Microsporidian parasite) protein is Probable serine/threonine-protein kinase ECU02_0550.